We begin with the raw amino-acid sequence, 1222 residues long: DNA-directed RNA polymerase II subunit RPB2 (1222 aa).

Asp835 provides a ligand contact to Mg(2+). Zn(2+) is bound by residues Cys1161, Cys1164, Cys1180, and Cys1183. A C4-type zinc finger spans residues 1161-1183 (CGICGLMTVVAKLKHNQFECRGC).

The protein belongs to the RNA polymerase beta chain family. As to quaternary structure, component of the RNA polymerase II (Pol II) complex consisting of 12 subunits.

Its subcellular location is the nucleus. It carries out the reaction RNA(n) + a ribonucleoside 5'-triphosphate = RNA(n+1) + diphosphate. Functionally, DNA-dependent RNA polymerase catalyzes the transcription of DNA into RNA using the four ribonucleoside triphosphates as substrates. Second largest component of RNA polymerase II which synthesizes mRNA precursors and many functional non-coding RNAs. Proposed to contribute to the polymerase catalytic activity and forms the polymerase active center together with the largest subunit. Pol II is the central component of the basal RNA polymerase II transcription machinery. It is composed of mobile elements that move relative to each other. RPB2 is part of the core element with the central large cleft, the clamp element that moves to open and close the cleft and the jaws that are thought to grab the incoming DNA template. This is DNA-directed RNA polymerase II subunit RPB2 (RPB2) from Eremothecium gossypii (strain ATCC 10895 / CBS 109.51 / FGSC 9923 / NRRL Y-1056) (Yeast).